The sequence spans 206 residues: Uridine kinase (206 aa).

11 to 18 (GGSASGKT) is an ATP binding site.

This sequence belongs to the uridine kinase family.

The protein resides in the cytoplasm. The enzyme catalyses uridine + ATP = UMP + ADP + H(+). It catalyses the reaction cytidine + ATP = CMP + ADP + H(+). It functions in the pathway pyrimidine metabolism; CTP biosynthesis via salvage pathway; CTP from cytidine: step 1/3. Its pathway is pyrimidine metabolism; UMP biosynthesis via salvage pathway; UMP from uridine: step 1/1. The sequence is that of Uridine kinase from Lactococcus lactis subsp. lactis (strain IL1403) (Streptococcus lactis).